The sequence spans 128 residues: Ribonuclease pancreatic (128 aa).

Over residues 1-15 (SESSAKKFERQHMDS) the composition is skewed to basic and acidic residues. A disordered region spans residues 1–28 (SESSAKKFERQHMDSRGSPSTNPNYCNE). Substrate is bound by residues K7 and R10. H12 (proton acceptor) is an active-site residue. Cystine bridges form between C26-C84, C40-C95, C58-C110, and C65-C72. A glycan (N-linked (GlcNAc...) asparagine) is linked at N34. Substrate contacts are provided by residues 41 to 45 (KPVNT), K66, and R85. The active-site Proton donor is H119.

Belongs to the pancreatic ribonuclease family. Monomer. Interacts with and forms tight 1:1 complexes with RNH1. Dimerization of two such complexes may occur. Interaction with RNH1 inhibits this protein. In terms of tissue distribution, pancreas.

Its subcellular location is the secreted. The enzyme catalyses an [RNA] containing cytidine + H2O = an [RNA]-3'-cytidine-3'-phosphate + a 5'-hydroxy-ribonucleotide-3'-[RNA].. It catalyses the reaction an [RNA] containing uridine + H2O = an [RNA]-3'-uridine-3'-phosphate + a 5'-hydroxy-ribonucleotide-3'-[RNA].. Functionally, endonuclease that catalyzes the cleavage of RNA on the 3' side of pyrimidine nucleotides. Acts on single-stranded and double-stranded RNA. This is Ribonuclease pancreatic (RNASE1) from Myocastor coypus (Coypu).